Reading from the N-terminus, the 229-residue chain is Uracil-DNA glycosylase (229 aa).

The active-site Proton acceptor is Asp-67.

The protein belongs to the uracil-DNA glycosylase (UDG) superfamily. UNG family.

The protein localises to the cytoplasm. The catalysed reaction is Hydrolyzes single-stranded DNA or mismatched double-stranded DNA and polynucleotides, releasing free uracil.. Functionally, excises uracil residues from the DNA which can arise as a result of misincorporation of dUMP residues by DNA polymerase or due to deamination of cytosine. The chain is Uracil-DNA glycosylase from Coxiella burnetii (strain RSA 493 / Nine Mile phase I).